The primary structure comprises 100 residues: Urease subunit gamma (100 aa).

The protein belongs to the urease gamma subunit family. As to quaternary structure, heterotrimer of UreA (gamma), UreB (beta) and UreC (alpha) subunits. Three heterotrimers associate to form the active enzyme.

The protein localises to the cytoplasm. The enzyme catalyses urea + 2 H2O + H(+) = hydrogencarbonate + 2 NH4(+). Its pathway is nitrogen metabolism; urea degradation; CO(2) and NH(3) from urea (urease route): step 1/1. This Mycolicibacterium smegmatis (strain ATCC 700084 / mc(2)155) (Mycobacterium smegmatis) protein is Urease subunit gamma.